A 560-amino-acid chain; its full sequence is Chaperonin GroEL 2 (560 aa).

Residues 29-32 (TLGP), K50, 86-90 (DGTTT), G414, and D494 contribute to the ATP site. The segment at 524-546 (EDEDDDDGGGGGGGGMPAGGAGG) is disordered. Gly residues predominate over residues 532–546 (GGGGGGGMPAGGAGG).

This sequence belongs to the chaperonin (HSP60) family. As to quaternary structure, forms a cylinder of 14 subunits composed of two heptameric rings stacked back-to-back. Interacts with the co-chaperonin GroES.

The protein resides in the cytoplasm. The enzyme catalyses ATP + H2O + a folded polypeptide = ADP + phosphate + an unfolded polypeptide.. In terms of biological role, together with its co-chaperonin GroES, plays an essential role in assisting protein folding. The GroEL-GroES system forms a nano-cage that allows encapsulation of the non-native substrate proteins and provides a physical environment optimized to promote and accelerate protein folding. The sequence is that of Chaperonin GroEL 2 from Salinibacter ruber (strain DSM 13855 / M31).